The primary structure comprises 521 residues: Bifunctional purine biosynthesis protein PurH (521 aa).

One can recognise an MGS-like domain in the interval M1–V145.

The protein belongs to the PurH family.

The enzyme catalyses (6R)-10-formyltetrahydrofolate + 5-amino-1-(5-phospho-beta-D-ribosyl)imidazole-4-carboxamide = 5-formamido-1-(5-phospho-D-ribosyl)imidazole-4-carboxamide + (6S)-5,6,7,8-tetrahydrofolate. The catalysed reaction is IMP + H2O = 5-formamido-1-(5-phospho-D-ribosyl)imidazole-4-carboxamide. The protein operates within purine metabolism; IMP biosynthesis via de novo pathway; 5-formamido-1-(5-phospho-D-ribosyl)imidazole-4-carboxamide from 5-amino-1-(5-phospho-D-ribosyl)imidazole-4-carboxamide (10-formyl THF route): step 1/1. It participates in purine metabolism; IMP biosynthesis via de novo pathway; IMP from 5-formamido-1-(5-phospho-D-ribosyl)imidazole-4-carboxamide: step 1/1. The chain is Bifunctional purine biosynthesis protein PurH from Burkholderia ambifaria (strain ATCC BAA-244 / DSM 16087 / CCUG 44356 / LMG 19182 / AMMD) (Burkholderia cepacia (strain AMMD)).